The primary structure comprises 353 residues: Deoxyhypusine synthase (353 aa).

Residues 90–94 (SNLIS), 116–118 (TAG), glutamate 122, and aspartate 228 each bind NAD(+). 121 to 122 (EE) serves as a coordination point for spermidine. Aspartate 233 contacts spermidine. Glycine 275 provides a ligand contact to NAD(+). Histidine 280 is a binding site for spermidine. 300-301 (TA) is an NAD(+) binding site. Spermidine-binding positions include 306–308 (GSD) and 315–321 (EAVSWGK). Lysine 321 functions as the Nucleophile in the catalytic mechanism. Residue 334-335 (EA) coordinates NAD(+).

Belongs to the deoxyhypusine synthase family. In terms of assembly, homotetramer. NAD(+) serves as cofactor.

It carries out the reaction [eIF5A protein]-L-lysine + spermidine = [eIF5A protein]-deoxyhypusine + propane-1,3-diamine. Its pathway is protein modification; eIF5A hypusination. In terms of biological role, catalyzes the NAD-dependent oxidative cleavage of spermidine and the subsequent transfer of the butylamine moiety of spermidine to the epsilon-amino group of a specific lysine residue of the eIF-5A precursor protein to form the intermediate deoxyhypusine residue. This is Deoxyhypusine synthase (dys-1) from Neurospora crassa (strain ATCC 24698 / 74-OR23-1A / CBS 708.71 / DSM 1257 / FGSC 987).